A 22-amino-acid chain; its full sequence is Major outer membrane protein (22 aa).

It belongs to the Gram-negative porin family. Disulfide bond interactions within and between MOMP molecules and other components form high molecular-weight oligomers.

The protein resides in the cell outer membrane. In terms of biological role, structural rigidity of the outer membrane of elementary bodies and porin forming, permitting diffusion of solutes through the intracellular reticulate body membrane. The sequence is that of Major outer membrane protein (ompH) from Avibacterium gallinarum (Pasteurella gallinarum).